The following is a 330-amino-acid chain: MAILAFQKPDKVLMLEADAKFGKFEFRPLEPGFGITVGNALRRILLSSLEGFAITTIRIEGVEHEFSSVPGVKEDVTNIILNLKQVRFKQVVEEFESEKVSITIENSSEFKAGDIGKYLTGFEVLNPELVICHLDSKATMQIDITINKGRGYVPADENREYCTDVNVIPIDSIYTPIRNVKYAVENFRVEQKTDYEKLVLEITTDGSIHPKEALKEAAKILIYHFMLFSDEKITLESNDVDGNEEFDEEVLHMRQLLKTKLVDMDLSVRALNCLKAADVETLGDLVQFNKTDLLKFRNFGKKSLTELDDLLESLNLSFGTDISKYKLDKE.

Positions 1 to 232 (MAILAFQKPD…YHFMLFSDEK (232 aa)) are alpha N-terminal domain (alpha-NTD). The alpha C-terminal domain (alpha-CTD) stretch occupies residues 248-330 (EEVLHMRQLL…DISKYKLDKE (83 aa)).

This sequence belongs to the RNA polymerase alpha chain family. Homodimer. The RNAP catalytic core consists of 2 alpha, 1 beta, 1 beta' and 1 omega subunit. When a sigma factor is associated with the core the holoenzyme is formed, which can initiate transcription.

It carries out the reaction RNA(n) + a ribonucleoside 5'-triphosphate = RNA(n+1) + diphosphate. DNA-dependent RNA polymerase catalyzes the transcription of DNA into RNA using the four ribonucleoside triphosphates as substrates. This is DNA-directed RNA polymerase subunit alpha from Bacteroides fragilis (strain ATCC 25285 / DSM 2151 / CCUG 4856 / JCM 11019 / LMG 10263 / NCTC 9343 / Onslow / VPI 2553 / EN-2).